A 186-amino-acid chain; its full sequence is UPF0398 protein BPUM_1952 (186 aa).

It belongs to the UPF0398 family.

In Bacillus pumilus (strain SAFR-032), this protein is UPF0398 protein BPUM_1952.